A 306-amino-acid chain; its full sequence is Ornithine carbamoyltransferase (306 aa).

Carbamoyl phosphate-binding positions include 51–54 (STRT), Q78, R102, and 129–132 (HPCQ). L-ornithine-binding positions include N160, D223, and 227-228 (SM). Carbamoyl phosphate is bound by residues 263 to 264 (CL) and R291.

This sequence belongs to the aspartate/ornithine carbamoyltransferase superfamily. OTCase family.

Its subcellular location is the cytoplasm. It carries out the reaction carbamoyl phosphate + L-ornithine = L-citrulline + phosphate + H(+). It functions in the pathway amino-acid biosynthesis; L-arginine biosynthesis; L-arginine from L-ornithine and carbamoyl phosphate: step 1/3. Functionally, reversibly catalyzes the transfer of the carbamoyl group from carbamoyl phosphate (CP) to the N(epsilon) atom of ornithine (ORN) to produce L-citrulline. In Trichormus variabilis (strain ATCC 29413 / PCC 7937) (Anabaena variabilis), this protein is Ornithine carbamoyltransferase.